The primary structure comprises 143 residues: Large ribosomal subunit protein uL13 (143 aa).

Belongs to the universal ribosomal protein uL13 family. In terms of assembly, part of the 50S ribosomal subunit.

Its function is as follows. This protein is one of the early assembly proteins of the 50S ribosomal subunit, although it is not seen to bind rRNA by itself. It is important during the early stages of 50S assembly. This Prochlorococcus marinus (strain MIT 9312) protein is Large ribosomal subunit protein uL13.